The chain runs to 463 residues: MSKSNGVSLAFPAEAATKEYAASLDSSDRLAAFREKFIVPSKANIASKKLAKPGLSPESCIYFCGNSLGIQPKATAKYLEAQLDTWSSIGVGGHFTDLEGSPLKQWQLLSEQAADSMSKIVGAKPEEVAAMGTLTTNLHLLLASFYKPTQTKHKILMDWKAFPSDHYAIESHIAWHDLDPKESMVLIGPDEGEYEISTQKIFSYIDKHADEAAMILLPGIQYYTGQLFDIQKITKYAHSRNMVVGWDLAHAFANVELKLHDWNVDFAAWCTYKYGNAGPGAMGGLFVHEQHGEVDYSAGEDAPKFRHRLTGWYGGDRSVRFKMDNKFKPIPGAGGFQISNPSAIDLACLCAALSVFDETSMADLRRKSLKLTAYLEFLLLRDYEEESRPFSIITPKDPEARGAQLSLLLKPGLLQNVAQKLQEAGIVCDKREPGVVRVAPVPLYNSFSEVWTFVKIFKDALQQ.

Residues L134, T135, 162–165 (FPSD), D247, H250, and Y272 contribute to the pyridoxal 5'-phosphate site. K273 carries the post-translational modification N6-(pyridoxal phosphate)lysine. The pyridoxal 5'-phosphate site is built by W312 and N340.

This sequence belongs to the kynureninase family. As to quaternary structure, homodimer. Requires pyridoxal 5'-phosphate as cofactor.

The protein localises to the cytoplasm. It carries out the reaction L-kynurenine + H2O = anthranilate + L-alanine + H(+). It catalyses the reaction 3-hydroxy-L-kynurenine + H2O = 3-hydroxyanthranilate + L-alanine + H(+). Its pathway is amino-acid degradation; L-kynurenine degradation; L-alanine and anthranilate from L-kynurenine: step 1/1. It participates in cofactor biosynthesis; NAD(+) biosynthesis; quinolinate from L-kynurenine: step 2/3. Its function is as follows. Catalyzes the cleavage of L-kynurenine (L-Kyn) and L-3-hydroxykynurenine (L-3OHKyn) into anthranilic acid (AA) and 3-hydroxyanthranilic acid (3-OHAA), respectively. The polypeptide is Kynureninase 2 (bna5-2) (Aspergillus niger (strain ATCC MYA-4892 / CBS 513.88 / FGSC A1513)).